The chain runs to 924 residues: Probable dipeptidyl-aminopeptidase B (924 aa).

Over residues 1 to 12 the composition is skewed to polar residues; sequence MPSTYSDDNTLR. The disordered stretch occupies residues 1 to 102; sequence MPSTYSDDNT…RSNQRSSADG (102 aa). The Cytoplasmic portion of the chain corresponds to 1 to 111; it reads MPSTYSDDNT…GQRMDRSLRR (111 aa). A compositionally biased stretch (basic and acidic residues) spans 14–23; it reads GLDRFRDHSP. Positions 31-43 are enriched in polar residues; it reads SQETDSTVSTTSI. Residues 47–58 show a composition bias toward basic and acidic residues; sequence RIQERLDTKEFP. Positions 87-100 are enriched in low complexity; sequence NASPSSRSNQRSSA. Residues 112–132 traverse the membrane as a helical; Signal-anchor for type II membrane protein segment; sequence WLFIVSGALVATWVIGLIFFV. At 133–924 the chain is on the vacuolar side; that stretch reads SSKAYKPSSS…GMKRRALPTA (792 aa). N-linked (GlcNAc...) asparagine glycosylation is found at N231 and N364. Catalysis depends on S768, which acts as the Charge relay system. N-linked (GlcNAc...) asparagine glycosylation occurs at N827. Residues D845 and H878 each act as charge relay system in the active site.

Belongs to the peptidase S9B family.

It is found in the vacuole membrane. The catalysed reaction is Release of an N-terminal dipeptide, Xaa-Yaa-|-Zaa-, from a polypeptide, preferentially when Yaa is Pro, provided Zaa is neither Pro nor hydroxyproline.. Type IV dipeptidyl-peptidase which removes N-terminal dipeptides sequentially from polypeptides having unsubstituted N-termini provided that the penultimate residue is proline. The polypeptide is Probable dipeptidyl-aminopeptidase B (dapB) (Neurospora crassa (strain ATCC 24698 / 74-OR23-1A / CBS 708.71 / DSM 1257 / FGSC 987)).